A 258-amino-acid chain; its full sequence is Thiazole synthase (258 aa).

The active-site Schiff-base intermediate with DXP is the Lys98. 1-deoxy-D-xylulose 5-phosphate-binding positions include Gly159, 185–186 (AG), and 207–208 (NT).

It belongs to the ThiG family. Homotetramer. Forms heterodimers with either ThiH or ThiS.

The protein localises to the cytoplasm. It carries out the reaction [ThiS sulfur-carrier protein]-C-terminal-Gly-aminoethanethioate + 2-iminoacetate + 1-deoxy-D-xylulose 5-phosphate = [ThiS sulfur-carrier protein]-C-terminal Gly-Gly + 2-[(2R,5Z)-2-carboxy-4-methylthiazol-5(2H)-ylidene]ethyl phosphate + 2 H2O + H(+). The protein operates within cofactor biosynthesis; thiamine diphosphate biosynthesis. In terms of biological role, catalyzes the rearrangement of 1-deoxy-D-xylulose 5-phosphate (DXP) to produce the thiazole phosphate moiety of thiamine. Sulfur is provided by the thiocarboxylate moiety of the carrier protein ThiS. In vitro, sulfur can be provided by H(2)S. This Bacillus cereus (strain ZK / E33L) protein is Thiazole synthase.